The primary structure comprises 355 residues: Uroporphyrinogen decarboxylase (355 aa).

Substrate contacts are provided by residues 38 to 42 (RQAGR), Asp-87, Tyr-162, Ser-217, and His-331.

This sequence belongs to the uroporphyrinogen decarboxylase family. Homodimer.

It is found in the cytoplasm. The catalysed reaction is uroporphyrinogen III + 4 H(+) = coproporphyrinogen III + 4 CO2. The protein operates within porphyrin-containing compound metabolism; protoporphyrin-IX biosynthesis; coproporphyrinogen-III from 5-aminolevulinate: step 4/4. Functionally, catalyzes the decarboxylation of four acetate groups of uroporphyrinogen-III to yield coproporphyrinogen-III. The sequence is that of Uroporphyrinogen decarboxylase from Streptomyces avermitilis (strain ATCC 31267 / DSM 46492 / JCM 5070 / NBRC 14893 / NCIMB 12804 / NRRL 8165 / MA-4680).